The following is a 181-amino-acid chain: Organ-specific protein S2 (181 aa).

A run of 4 repeats spans residues 59–84, 85–110, 111–136, and 137–162. Positions 59-162 are 4 X 26 AA tandem repeats; the sequence is HAKENMGAIG…NASAYGDNEI (104 aa). Positions 94-181 are disordered; sequence GEFEPRPNAS…PRPSMTKYNA (88 aa).

To organ specific protein P4. As to expression, expressed in stems.

This Pisum sativum (Garden pea) protein is Organ-specific protein S2.